The sequence spans 1697 residues: UDP-sugar-dependent glycosyltransferase 52 (1697 aa).

2 disordered regions span residues 20–40 and 142–166; these read HSDS…NYEN and STDL…LMIP. Positions 234-332 constitute a PH domain; sequence DYVLENYLYK…WYHEINRMQK (99 aa). 2 disordered regions span residues 573 to 645 and 707 to 756; these read FRSK…TTHE and PLDK…KQSQ. 2 stretches are compositionally biased toward low complexity: residues 584–628 and 711–722; these read QNSQ…SSSA and QQQQQQQQQQQQ. 2 consecutive GRAM domains span residues 658–793 and 881–948; these read STFH…TKER and IKIK…KKYS. Positions 739–749 are enriched in acidic residues; that stretch reads TDSDTDSESDF. 4 disordered regions span residues 1011–1047, 1062–1085, 1110–1130, and 1466–1488; these read SPSI…IHST, DGEN…SNSF, SAQQ…STTT, and EHNN…SNKS. Low complexity-rich tracts occupy residues 1026-1047, 1065-1084, 1112-1130, and 1469-1479; these read PPSS…IHST, NNSN…KSNS, QQQQ…STTT, and NNNNNNNNNNN. The segment at 1622–1685 adopts an FYVE-type zinc-finger fold; the sequence is SSAPNSCMGC…VCDKCFNDLQ (64 aa). Zn(2+)-binding residues include cysteine 1628, cysteine 1631, cysteine 1647, cysteine 1650, cysteine 1655, cysteine 1658, cysteine 1677, and cysteine 1680.

It belongs to the glycosyltransferase 28 family.

The enzyme catalyses a sterol + UDP-alpha-D-glucose = a sterol 3-beta-D-glucoside + UDP + H(+). Its function is as follows. Involved in the biosynthesis of sterol glucoside. Can use different sterols such as cholesterol, sitosterol, and ergosterol as sugar acceptors. The polypeptide is UDP-sugar-dependent glycosyltransferase 52 (ugt52) (Dictyostelium discoideum (Social amoeba)).